Reading from the N-terminus, the 374-residue chain is Wnt inhibitory factor 1 (374 aa).

Positions 1 to 28 are cleaved as a signal peptide; the sequence is MSLTGYFAAPLCSIFLFILAHADAGQQE. In terms of domain architecture, WIF spans 33–172; it reads MWIDAHQARV…PQNAIFFKTC (140 aa). N-linked (GlcNAc...) asparagine glycosylation occurs at Asn-83. Intrachain disulfides connect Cys-135/Cys-172, Cys-177/Cys-187, Cys-181/Cys-193, Cys-195/Cys-204, Cys-209/Cys-219, Cys-213/Cys-225, and Cys-227/Cys-236. 5 consecutive EGF-like domains span residues 173-205, 208-237, 237-269, 270-301, and 302-333; these read QQAK…PHCE, LCMP…INCD, DKVN…EQCE, TSKC…DLCS, and KPVC…RYCN. Residue Asn-240 is glycosylated (N-linked (GlcNAc...) asparagine). Cystine bridges form between Cys-241–Cys-251, Cys-245–Cys-257, Cys-259–Cys-268, Cys-273–Cys-283, Cys-277–Cys-289, Cys-291–Cys-300, Cys-305–Cys-315, Cys-309–Cys-321, and Cys-323–Cys-332. Residues 343–374 form a disordered region; sequence ALRPTGSRNRQHTPSPKRTEDRQALPESNYIW. Positions 348 to 358 are enriched in polar residues; sequence GSRNRQHTPSP.

During somatogenesis, expressed predominantly in unsegmented paraxial presomitic mesoderm and, to a much lesser extent, in newly segmented somites.

The protein localises to the secreted. In terms of biological role, binds to WNT proteins and inhibits their activities. May be involved in mesoderm segmentation. The chain is Wnt inhibitory factor 1 (wif1) from Xenopus laevis (African clawed frog).